A 305-amino-acid polypeptide reads, in one-letter code: Glycine--tRNA ligase alpha subunit (305 aa).

Belongs to the class-II aminoacyl-tRNA synthetase family. Tetramer of two alpha and two beta subunits.

Its subcellular location is the cytoplasm. It catalyses the reaction tRNA(Gly) + glycine + ATP = glycyl-tRNA(Gly) + AMP + diphosphate. This chain is Glycine--tRNA ligase alpha subunit, found in Streptococcus gordonii (strain Challis / ATCC 35105 / BCRC 15272 / CH1 / DL1 / V288).